The sequence spans 505 residues: Flagellin (505 aa).

It belongs to the bacterial flagellin family.

Its subcellular location is the secreted. The protein localises to the bacterial flagellum. In terms of biological role, flagellin is the subunit protein which polymerizes to form the filaments of bacterial flagella. The protein is Flagellin (fliC) of Salmonella montevideo.